A 494-amino-acid chain; its full sequence is Probable cytosol aminopeptidase (494 aa).

Residues K260 and D265 each coordinate Mn(2+). K272 is an active-site residue. Mn(2+) is bound by residues D283, D342, and E344. R346 is a catalytic residue.

Belongs to the peptidase M17 family. Mn(2+) is required as a cofactor.

Its subcellular location is the cytoplasm. The enzyme catalyses Release of an N-terminal amino acid, Xaa-|-Yaa-, in which Xaa is preferably Leu, but may be other amino acids including Pro although not Arg or Lys, and Yaa may be Pro. Amino acid amides and methyl esters are also readily hydrolyzed, but rates on arylamides are exceedingly low.. It catalyses the reaction Release of an N-terminal amino acid, preferentially leucine, but not glutamic or aspartic acids.. Functionally, presumably involved in the processing and regular turnover of intracellular proteins. Catalyzes the removal of unsubstituted N-terminal amino acids from various peptides. The sequence is that of Probable cytosol aminopeptidase from Bacillus cereus (strain B4264).